The sequence spans 377 residues: Ribosomal RNA large subunit methyltransferase G (377 aa).

It belongs to the methyltransferase superfamily. RlmG family.

The protein resides in the cytoplasm. It catalyses the reaction guanosine(1835) in 23S rRNA + S-adenosyl-L-methionine = N(2)-methylguanosine(1835) in 23S rRNA + S-adenosyl-L-homocysteine + H(+). Specifically methylates the guanine in position 1835 (m2G1835) of 23S rRNA. In Aeromonas salmonicida (strain A449), this protein is Ribosomal RNA large subunit methyltransferase G.